The primary structure comprises 177 residues: Putative zinc finger protein 826 (177 aa).

The C2H2-type 1; degenerate zinc finger occupies 99–114 (KTFTWSSSPHKHRRTH). The C2H2-type 2; degenerate zinc finger occupies 120–142 (YKCEECGKAFTASSTLSEYKTIH). Residues 148–170 (CKCEECGKAFNWSSDFNKHKRIH) form a C2H2-type 3 zinc finger.

It is found in the nucleus. May be involved in transcriptional regulation. The polypeptide is Putative zinc finger protein 826 (ZNF826P) (Homo sapiens (Human)).